We begin with the raw amino-acid sequence, 500 residues long: Abscisic acid 8'-hydroxylase 3 (500 aa).

Residues 3–23 (ASFVIVIVISFFISLAFMCYV) traverse the membrane as a helical segment. Cys426 contributes to the heme binding site.

This sequence belongs to the cytochrome P450 family. Requires heme as cofactor.

The protein localises to the membrane. It carries out the reaction 2-cis-(+)-abscisate + reduced [NADPH--hemoprotein reductase] + O2 = (+)-8'-hydroxyabscisate + oxidized [NADPH--hemoprotein reductase] + H2O + H(+). Its pathway is plant hormone degradation; abscisic acid degradation. Involved in the oxidative degradation of abscisic acid. The chain is Abscisic acid 8'-hydroxylase 3 (CYP707A7) from Oryza sativa subsp. japonica (Rice).